Reading from the N-terminus, the 370-residue chain is GTPase Obg (370 aa).

Residues 1–159 form the Obg domain; it reads MKFIDEARIE…RMLRLELKVL (159 aa). An OBG-type G domain is found at 160–334; that stretch reads ADVGLLGMPN…LCYAIYDYLA (175 aa). Residues 166 to 173, 191 to 195, 213 to 216, 284 to 287, and 315 to 317 each bind GTP; these read GMPNAGKS, FTTLA, DIPG, NKLD, and SAL. The Mg(2+) site is built by Ser-173 and Thr-193. Residues 344–370 are disordered; the sequence is EEEDLATDVRFRDAPPADGGATPGDDA.

Belongs to the TRAFAC class OBG-HflX-like GTPase superfamily. OBG GTPase family. Monomer. Requires Mg(2+) as cofactor.

The protein resides in the cytoplasm. An essential GTPase which binds GTP, GDP and possibly (p)ppGpp with moderate affinity, with high nucleotide exchange rates and a fairly low GTP hydrolysis rate. Plays a role in control of the cell cycle, stress response, ribosome biogenesis and in those bacteria that undergo differentiation, in morphogenesis control. This chain is GTPase Obg, found in Burkholderia ambifaria (strain ATCC BAA-244 / DSM 16087 / CCUG 44356 / LMG 19182 / AMMD) (Burkholderia cepacia (strain AMMD)).